The sequence spans 2102 residues: Probable serine/threonine-protein kinase DDB_G0272282 (2102 aa).

The 118-residue stretch at Met1–Ala118 folds into the PX domain. The PH domain maps to Asn124 to Gln222. Positions Gln225–Lys240 are enriched in basic and acidic residues. Disordered stretches follow at residues Gln225–Ser289, Gly302–Asn390, Glu426–Pro558, Ser574–Asn665, Asn685–Leu768, Lys804–Arg842, Gln1029–Asn1051, Gly1106–Gln1224, and Ser1476–Thr1514. Composition is skewed to low complexity over residues Ser256–Ser281 and Asn304–Asn327. Residues His328–Gly348 are compositionally biased toward basic residues. Low complexity-rich tracts occupy residues Ser353–Leu376 and Glu426–Gln437. Residues Gln438 to Asn450 show a composition bias toward gly residues. Residues Ser466–Gly484 are compositionally biased toward low complexity. Gly residues predominate over residues Ser485–Leu501. 2 stretches are compositionally biased toward low complexity: residues Ser535 to Pro558 and Asn587 to Asn626. A compositionally biased stretch (polar residues) spans Thr627 to Thr659. The span at Lys804 to Ile824 shows a compositional bias: basic and acidic residues. Over residues Asn827–Leu841 the composition is skewed to polar residues. Residues Gly1106–Leu1118 are compositionally biased toward polar residues. Low complexity-rich tracts occupy residues Thr1119–Ile1182, Glu1196–Pro1221, and Ser1476–Leu1492. Residues Ser1493–Ile1507 are compositionally biased toward pro residues. The Protein kinase domain maps to Phe1527–Phe1851. Residues Ile1533–Val1541 and Lys1556 contribute to the ATP site. The Proton acceptor role is filled by Asp1650. 3 stretches are compositionally biased toward low complexity: residues Asn1687–Asn1729, Ser1902–Asn1999, and Asn2006–Asn2052. Disordered stretches follow at residues Asn1687–Leu1741 and Ser1902–Glu2070. The 60-residue stretch at Ala1852–Gln1911 folds into the AGC-kinase C-terminal domain.

The protein belongs to the protein kinase superfamily. AGC Ser/Thr protein kinase family.

It carries out the reaction L-seryl-[protein] + ATP = O-phospho-L-seryl-[protein] + ADP + H(+). It catalyses the reaction L-threonyl-[protein] + ATP = O-phospho-L-threonyl-[protein] + ADP + H(+). This is Probable serine/threonine-protein kinase DDB_G0272282 from Dictyostelium discoideum (Social amoeba).